The sequence spans 218 residues: 1-Cys peroxiredoxin (218 aa).

The 161-residue stretch at 4 to 164 (LTIGDTIPDL…VLRVVESLQK (161 aa)) folds into the Thioredoxin domain. Cys46 serves as the catalytic Cysteine sulfenic acid (-SOH) intermediate. Residues 194–217 (KEMFPQGFKTADLPSKKEYLRFTN) carry the Bipartite nuclear localization signal motif.

Belongs to the peroxiredoxin family. Prx6 subfamily.

It is found in the nucleus. It localises to the cytoplasm. The enzyme catalyses a hydroperoxide + [thioredoxin]-dithiol = an alcohol + [thioredoxin]-disulfide + H2O. Thiol-specific peroxidase that catalyzes the reduction of hydrogen peroxide and organic hydroperoxides to water and alcohols, respectively. Seems to contribute to the inhibition of germination during stress. The sequence is that of 1-Cys peroxiredoxin from Medicago truncatula (Barrel medic).